The sequence spans 409 residues: Multidrug efflux pump Tap (409 aa).

A run of 12 helical transmembrane segments spans residues 10 to 30 (LLILFAALTAGAGNGITIVAF), 46 to 66 (IVAMAGTLPLLVATLIAGAAV), 80 to 98 (LLSALSVAAVPVLALIFGV), 104 to 123 (AVLAVLAGLGAFFDPAGMTA), 144 to 168 (SVYEAVFNLGYIVGPGIGGLMIATL), 174 to 193 (MWVTAGAFCCSILAISVLRL), 218 to 240 (FVWYTPVLRTLAIVDLVATGLYM), 260 to 282 (LGWVLMALSIGGLLGALGYAVMS), 289 to 308 (ATMLTAVITLGVAMTVIAFL), 313 to 335 (LILVLCAIVGFVYGPIAPIYNYV), 348 to 370 (VVGVMGSLAYAAGPLGLILAGPL), and 375 to 397 (GLHATFLALSLPMLLLGVVAVFL).

Belongs to the major facilitator superfamily. Drug:H(+) antiporter-3 (DHA3) (TC 2.A.1.21) family.

The protein localises to the cell inner membrane. Efflux activity is inhibited by carbonyl cyanide m-chlorophenylhydrazone (CCCP) and reserpine, but not by o-vanadate or chlorpromazine (CPZ). Its function is as follows. Efflux pump that contributes to intrinsic antibiotic resistance. The pump uses the electrochemical gradient as a source of energy. Confers low-level resistance to tetracycline and to several aminoglycosides, including streptomycin, gentamicin, 2'-N-ethylnetilmicin and 6'-N-ethylnetilmicin. In Mycolicibacterium fortuitum (Mycobacterium fortuitum), this protein is Multidrug efflux pump Tap.